Here is a 184-residue protein sequence, read N- to C-terminus: uncharacterized protein (184 aa).

One can recognise a Nudix hydrolase domain in the interval Leu36–Leu164. The short motif at Gly73–Gly95 is the Nudix box element. Mg(2+) is bound by residues Glu89 and Glu93.

The protein belongs to the Nudix hydrolase family. Requires Mg(2+) as cofactor.

This is an uncharacterized protein from Salmonella typhi.